The sequence spans 332 residues: DNA-directed RNA polymerase subunit alpha (332 aa).

The alpha N-terminal domain (alpha-NTD) stretch occupies residues 1-226 (MLIAQRPTLT…ELFGLARELN (226 aa)). Positions 243–332 (LSSELSMPIE…GYDEDESTTI (90 aa)) are alpha C-terminal domain (alpha-CTD).

It belongs to the RNA polymerase alpha chain family. In terms of assembly, homodimer. The RNAP catalytic core consists of 2 alpha, 1 beta, 1 beta' and 1 omega subunit. When a sigma factor is associated with the core the holoenzyme is formed, which can initiate transcription.

It catalyses the reaction RNA(n) + a ribonucleoside 5'-triphosphate = RNA(n+1) + diphosphate. DNA-dependent RNA polymerase catalyzes the transcription of DNA into RNA using the four ribonucleoside triphosphates as substrates. The polypeptide is DNA-directed RNA polymerase subunit alpha (Leifsonia xyli subsp. xyli (strain CTCB07)).